The sequence spans 352 residues: MRSLSGLLLLLTACLAVNASSVPTLPDDIQVQENFDLSRIYGKWFNVAVGSTCPWLKRFKEKMTMSTVVLIAGPTSKEISVTNTHRRKGVCESISGTYEKTSADGKFLYHKAKWNITMESYVVHTNYDEYAIFLTKKLSRRHGPTITVKLYGREPQLRESLLEEFREVALGVGIPEDAIFTMPDRGECVPGEQDPVPTPLSRARRAVLTQEEEGSGAGQPVTNFSKKADSCQLDYSQGPCLGLFKRYFYNGTSMACETFLYGGCMGNGNNFLSEKECLQTCRTVEACNLPIVQGPCRSYIQLWAFDAVKGKCVRFSYGGCKGNGNKFYSEKECKEYCGIPGEADEELLRFSN.

The first 19 residues, 1-19, serve as a signal peptide directing secretion; it reads MRSLSGLLLLLTACLAVNA. Positions 53 and 111 each coordinate 3-hydroxy-L-kynurenine. Cysteine 91 and cysteine 188 form a disulfide bridge. Asparagine 115 carries N-linked (GlcNAc...) asparagine glycosylation. 3-hydroxy-L-kynurenine contacts are provided by lysine 137 and lysine 149. A glycan (O-linked (Xyl...) (chondroitin sulfate) serine) is linked at serine 215. Asparagine 223 and asparagine 250 each carry an N-linked (GlcNAc...) asparagine glycan. 6 disulfides stabilise this stretch: cysteine 231–cysteine 281, cysteine 240–cysteine 264, cysteine 256–cysteine 277, cysteine 287–cysteine 337, cysteine 296–cysteine 320, and cysteine 312–cysteine 333. BPTI/Kunitz inhibitor domains lie at 231–281 and 287–337; these read CQLD…LQTC and CNLP…KEYC.

The protein in the N-terminal section; belongs to the calycin superfamily. Lipocalin family. In terms of assembly, monomer. Homodimer. In plasma, it occurs as a monomer or dimer and in covalently-linked complexes with immunoglobulin A (IgA), ALB/albumin and F2/prothrombin. Chromophore-bound alpha-1-microglobulin interacts with the constant region of immunoglobulin A. Chromophore-bound alpha-1-microglobulin interacts with ALB with molar ratio 2:1 and 1:1; this interaction does not prevent fatty acid binding to ALB. Interacts with F2/prothrombin (via N-terminus) with molar ratio 2:1 and 1:1; this interaction does not prevent the activation of prothrombin to thrombin. Interacts with NDUFAB1, a subunit of mitochondrial complex I. Interacts with FN1. As to quaternary structure, I-alpha-I plasma protease inhibitors are assembled from one or two heavy chains (HC) and one light chain, bikunin. Inter-alpha-inhibitor (I-alpha-I) is composed of ITIH1/HC1, ITIH2/HC2 and bikunin, and pre-alpha-inhibitor (P-alpha-I) of ITIH3/HC3 and bikunin. Interacts with TNFAIP6 (via Link domain). Monomer. Also occurs as a complex with tryptase in mast cells. In terms of processing, the precursor is proteolytically processed into separately functioning proteins. Post-translationally, 3-hydroxykynurenine, an oxidized tryptophan metabolite that is common in biological fluids, reacts with Cys-53, Lys-111, Lys-137, and Lys-149 to form heterogeneous polycyclic chromophores including hydroxanthommatin. The reaction by alpha-1-microglobulin is autocatalytic; the human protein forms chromophore even when expressed in insect and bacterial cells. The chromophore can react with accessible cysteines forming non-reducible thioether cross-links with other molecules of alpha-1-microglobulin or with other proteins such as Ig alpha-1 chain C region 'Cys-352'. Heavy chains are interlinked with bikunin via a chondroitin 4-sulfate bridge to the C-terminal aspartate. In terms of processing, proteolytically cleaved by PRSS3 at Kunitz domain 2. In terms of tissue distribution, expressed by the liver and secreted in plasma.

It localises to the secreted. The protein localises to the endoplasmic reticulum. The protein resides in the cytoplasm. It is found in the cytosol. Its subcellular location is the cell membrane. It localises to the nucleus membrane. The protein localises to the mitochondrion inner membrane. The protein resides in the extracellular space. It is found in the extracellular matrix. Its function is as follows. Antioxidant and tissue repair protein with reductase, heme-binding and radical-scavenging activities. Removes and protects against harmful oxidants and repairs macromolecules in intravascular and extravascular spaces and in intracellular compartments. Intravascularly, plays a regulatory role in red cell homeostasis by preventing heme- and reactive oxygen species-induced cell damage. Binds and degrades free heme to protect fetal and adult red blood cells from hemolysis. Reduces extracellular methemoglobin, a Fe3+ (ferric) form of hemoglobin that cannot bind oxygen, back to the Fe2+ (ferrous) form deoxyhemoglobin, which has oxygen-carrying potential. Upon acute inflammation, inhibits oxidation of low-density lipoprotein particles by MPO and limits vascular damage. Extravascularly, protects from oxidation products formed on extracellular matrix structures and cell membranes. Catalyzes the reduction of carbonyl groups on oxidized collagen fibers and preserves cellular and extracellular matrix ultrastructures. Importantly, counteracts the oxidative damage at blood-placenta interface, preventing leakage of free fetal hemoglobin into the maternal circulation. Intracellularly, has a role in maintaining mitochondrial redox homeostasis. Bound to complex I of the respiratory chain of mitochondria, may scavenge free radicals and preserve mitochondrial ATP synthesis. Protects renal tubule epithelial cells from heme-induced oxidative damage to mitochondria. Reduces cytochrome c from Fe3+ (ferric) to the Fe2+ (ferrous) state through formation of superoxide anion radicals in the presence of ascorbate or NADH/NADPH electron donor cofactors, ascorbate being the preferred cofactor. Has a chaperone role in facilitating the correct folding of bikunin in the endoplasmic reticulum compartment. In terms of biological role, kunitz-type serine protease inhibitor and structural component of extracellular matrix with a role in extracellular space remodeling and cell adhesion. Among others, has antiprotease activity toward kallikrein, a protease involved in airway inflammation; inhibits GZMK/granzyme, a granule-stored serine protease involved in NK and T cell cytotoxic responses; and inhibits PLG/plasmin, a protease required for activation of matrix metalloproteinases. As part of I-alpha-I complex, provides for the heavy chains to be transferred from I-alpha-I complex to hyaluronan in the presence of TNFAIP6, in a dynamic process that releases free bikunin and remodels extracellular matrix proteoglycan structures. Free bikunin, but not its heavy chain-bound form, acts as a potent protease inhibitor in airway secretions. Part of hyaluronan-rich extracellular matrix that surrounds oocyte during cumulus oophorus expansion, an indispensable process for proper ovulation. Also inhibits calcium oxalate crystallization. Kunitz-type serine protease inhibitor. Has high catalytic efficiency for F10/blood coagulation factor Xa and may act as an anticoagulant by inhibiting prothrombin activation. Inhibits trypsin and mast cell CMA1/chymase and tryptase proteases. In Bos taurus (Bovine), this protein is Protein AMBP (AMBP).